Consider the following 258-residue polypeptide: L-aminoadipate-semialdehyde dehydrogenase-phosphopantetheinyl transferase (258 aa).

This sequence belongs to the P-Pant transferase superfamily. AcpS family.

The catalysed reaction is apo-[ACP] + CoA = holo-[ACP] + adenosine 3',5'-bisphosphate + H(+). Its function is as follows. Catalyzes the transfer of a 4'-phosphopantetheine moiety from coenzyme A to a serine residue of acceptor proteins, such as alpha-aminoadipate reductase. Necessary for alpha-aminoadipate reductase activity. This is L-aminoadipate-semialdehyde dehydrogenase-phosphopantetheinyl transferase (LYS5) from Candida glabrata (strain ATCC 2001 / BCRC 20586 / JCM 3761 / NBRC 0622 / NRRL Y-65 / CBS 138) (Yeast).